Consider the following 360-residue polypeptide: NAD(P)H-quinone oxidoreductase subunit 1, chloroplastic (360 aa).

The next 8 membrane-spanning stretches (helical) occupy residues 27 to 47 (IWIFVPIFSLVLGIITGVLVI), 98 to 118 (FSIGPSIAVISILLSYSVIPF), 129 to 149 (IGIFLWIAISSIAPIGLLMSG), 165 to 185 (AAQSISYEIPLTLCVLSISLL), 203 to 223 (FWGWNLWRQPIGFIIFLISSL), 253 to 273 (FGLFYVASYLNLLISSLFVTV), 297 to 317 (IFGTTIGIFITLAKTYLFLFV), and 340 to 360 (FLLPISLGNLLLTTSFQLFSL).

The protein belongs to the complex I subunit 1 family. NDH is composed of at least 16 different subunits, 5 of which are encoded in the nucleus.

It localises to the plastid. It is found in the chloroplast thylakoid membrane. It carries out the reaction a plastoquinone + NADH + (n+1) H(+)(in) = a plastoquinol + NAD(+) + n H(+)(out). The catalysed reaction is a plastoquinone + NADPH + (n+1) H(+)(in) = a plastoquinol + NADP(+) + n H(+)(out). Functionally, NDH shuttles electrons from NAD(P)H:plastoquinone, via FMN and iron-sulfur (Fe-S) centers, to quinones in the photosynthetic chain and possibly in a chloroplast respiratory chain. The immediate electron acceptor for the enzyme in this species is believed to be plastoquinone. Couples the redox reaction to proton translocation, and thus conserves the redox energy in a proton gradient. This Arabidopsis thaliana (Mouse-ear cress) protein is NAD(P)H-quinone oxidoreductase subunit 1, chloroplastic.